Reading from the N-terminus, the 1133-residue chain is Envelopment polyprotein (1133 aa).

The signal sequence occupies residues 1-17 (MWSLLLLAALVGQGFAL). The Lumenal segment spans residues 18–484 (KNVFDMRIQC…PGFHGWATAA (467 aa)). Cystine bridges form between C27–C149, C61–C155, C107–C126, C131–C136, C173–C183, C208–C245, C232–C349, C374–C433, C378–C387, C403–C422, and C450–C473. An N-linked (GlcNAc...) asparagine; by host glycan is attached at N132. N233 and N345 each carry an N-linked (GlcNAc...) asparagine; by host glycan. A glycan (N-linked (GlcNAc...) asparagine; by host) is linked at N397. A helical transmembrane segment spans residues 485–504 (LLITFCFGWVLIPACTLAIL). Topologically, residues 505-626 (LVLKFFANIL…NLFRYKSRCY (122 aa)) are cytoplasmic. A binding to the ribonucleoprotein region spans residues 514 to 531 (LHTSNQENRFKAILRKIK). CCHC-type zinc fingers lie at residues 543–563 (CEICKYECETLKELKAHNLSC) and 568–589 (CPYCFTHCEPTETAIQAHYKVC). Binding to the ribonucleoprotein stretches follow at residues 586–603 (YKVCQATHRFREDLKKTV), 590–601 (QATHRFREDLKK), and 609–623 (GPGCYRTLNLFRYKS). The ITAM domain maps to 609–632 (GPGCYRTLNLFRYKSRCYILTMWT). The short motif at 613–616 (YRTL) is the YxxL element. The chain crosses the membrane as a helical span at residues 627–647 (ILTMWTLLLIIESILWAASAA). Topologically, residues 648–1104 (EIPLVPLWTD…WVMGIINGNW (457 aa)) are lumenal. 8 disulfides stabilise this stretch: C733–C768, C737–C775, C749–C883, C763–C894, C778–C902, C804–C813, C821–C830, and C861–C865. The interval 755-775 (YEYENSWACNPPDCPGVGTGC) is fusion loop. N926 carries an N-linked (GlcNAc...) asparagine; by host glycan. Intrachain disulfides connect C968/C998, C991/C1043, C1008/C1013, C1044/C1049, and C1083/C1087. A helical transmembrane segment spans residues 1105–1125 (VVLIVLCVLLLFSLILLSILC). Positions 1120–1133 (LLSILCPVRKHKKS) are binding to the ribonucleoprotein. The Cytoplasmic segment spans residues 1126 to 1133 (PVRKHKKS).

The protein belongs to the hantavirus envelope glycoprotein family. As to quaternary structure, homodimer. Homotetramer; forms heterotetrameric Gn-Gc spikes in the pre-fusion conformation. Interacts (via C-terminus) with the nucleoprotein. Interacts with host TUFM; this interaction contributes to the virus-induced degradation of mitochondria by autophagy, which leads to degradation of host MAVS and inhibition of type I interferon (IFN) responses. Interacts with host MAP1LC3B; this interaction contributes to the virus-induced degradation of mitochondria by autophagy, which leads to degradation of host MAVS and inhibition of type I interferon (IFN) responses. Homodimer. Homotetramer; forms heterotetrameric Gn-Gc spikes in the pre-fusion conformation. Homotrimer; forms homotrimer in the post-fusion conformation at acidic pH. Interacts (via C-terminus) with the nucleoprotein. Envelope polyprotein precursor is quickly cleaved in vivo just after synthesis, presumably by host signal peptidase.

It localises to the virion membrane. It is found in the host cell surface. Its subcellular location is the host Golgi apparatus membrane. The protein resides in the host endoplasmic reticulum membrane. The protein localises to the host mitochondrion. Its function is as follows. Forms homotetramers with glycoprotein C at the surface of the virion. Attaches the virion to host cell receptors including integrin ITGAV/ITGB3. This attachment induces virion internalization predominantly through clathrin-dependent endocytosis. Mediates the assembly and budding of infectious virus particles through its interaction with the nucleocapsid protein and the viral genome. May dysregulate normal immune and endothelial cell responses through an ITAM motif. Translocates to mitochondria, binds to host TUFM and recruits MAP1LC3B. These interactions induce mitochondrial autophagy and therefore destruction of host MAVS leading to inhibition of type I interferon (IFN) responses. Concomitant breakdown of glycoprotein N is apparently prevented by the nucleoprotein that may inhibit Gn-stimulated autophagosome-lysosome fusion. Interacts with the viral genomic RNA. Functionally, forms homotetramers with glycoprotein N at the surface of the virion. Attaches the virion to host cell receptors including integrin ITGAV/ITGB3. This attachment induces virion internalization predominantly through clathrin-dependent endocytosis. Class II fusion protein that promotes fusion of viral membrane with host endosomal membrane after endocytosis of the virion. In Homo sapiens (Human), this protein is Envelopment polyprotein (GP).